A 205-amino-acid chain; its full sequence is Probable GTP-binding protein EngB (205 aa).

Positions 22–198 constitute an EngB-type G domain; sequence HLPEYAFIGR…LSYIDEVNQD (177 aa). GTP is bound by residues 30–37, 57–61, 75–78, 142–145, and 177–179; these read GRSNVGKS, GKTQL, DLPG, TKAD, and TSA. Mg(2+) contacts are provided by Ser-37 and Thr-59.

Belongs to the TRAFAC class TrmE-Era-EngA-EngB-Septin-like GTPase superfamily. EngB GTPase family. Mg(2+) is required as a cofactor.

In terms of biological role, necessary for normal cell division and for the maintenance of normal septation. The chain is Probable GTP-binding protein EngB from Flavobacterium psychrophilum (strain ATCC 49511 / DSM 21280 / CIP 103535 / JIP02/86).